The following is a 417-amino-acid chain: Guanine nucleotide-exchange factor SEC12 (417 aa).

At 1–388 the chain is on the cytoplasmic side; it reads MGRRRGVELY…QLHLLPSRRS (388 aa). At Tyr-10 the chain carries 3'-nitrotyrosine. Residues 101–135 form a disordered region; sequence KGSKAEKSGSKEQGPRQRKGAAPAEKKSGAEVHPE. 2 stretches are compositionally biased toward basic and acidic residues: residues 103–115 and 124–135; these read SKAEKSGSKEQGP and AEKKSGAEVHPE. 3 WD repeats span residues 152-191, 194-232, and 298-337; these read STEPLQKVVCFNHDNTLLATGGSDGHVRVWKVPSLEKVLE, AHEGEIGDLALGPDGKLVTVGWDFKASVWQKDQLVTQLQ, and CGHEVISCLTVSESGTFLGLGTVTGSVAIYIAFSLQRLYY. Residues 389–409 form a helical membrane-spanning segment; that stretch reads VPVWLLLLLCVGLIIVTILLL. Residues 410-417 lie on the Lumenal side of the membrane; the sequence is QSAFPGFL.

As to quaternary structure, interacts with SAR1B (GDP-bound form). Interacts with MIA2; recruits PREB to endoplasmic reticulum exit sites. Interacts with CIDEB; facilitating loading of SCAP-SREBP into COPII vesicles.

Its subcellular location is the endoplasmic reticulum membrane. It is found in the nucleus. Its function is as follows. Guanine nucleotide exchange factor (GEF) that regulates the assembly of the coat protein complex II/COPII in endoplasmic reticulum (ER) to Golgi vesicle-mediated transport. Selectively activates SAR1A and SAR1B by promoting the exchange of guanosine diphosphate (GDP) for guanosine triphosphate (GTP) in these small GTPases. In their activated GTP-bound state, SAR1A and SAR1B insert into the membrane of the endoplasmic reticulum where they recruit the remainder of the coat protein complex II/COPII which is responsible for both the sorting of proteins and the deformation and budding of membranes into vesicles destined to the Golgi. In terms of biological role, was first identified based on its probable role in the regulation of pituitary gene transcription. Binds to the prolactin gene (PRL) promoter and seems to activate transcription. This Rattus norvegicus (Rat) protein is Guanine nucleotide-exchange factor SEC12.